We begin with the raw amino-acid sequence, 338 residues long: MGGINMEDNKKTIFSGIQPSGNLTIGNYFGALKNWVKLQDEYNCFYCIVDLHAITVRQVPQELRKRTLEVLAVYIASGLDPEKNTLFIQSHVPAHTEAAWLLNCFTYLGELNRMTQFKDKSQNAGESISAGLLNYPVLMAADILLYNADLVPVGNDQKQHLELTRDIATRFNNLYSPTFKVPEPYIGKTGARIMDLQEPKKKMSKSAENKNGYILIMDPPNIIQNKINRAVTDNEGIVRYSDEQPGVKNLMNILSTATGKNVESIEKEYAGLGYSKFKKDVAEAIIAEVEPLQKEVKRYLEDKSYLEKVYKEGAQKASYVANKTLSKMKRKIGFVLDK.

ATP contacts are provided by residues 18 to 20 (QPS) and 26 to 27 (GN). The short motif at 19-27 (PSGNLTIGN) is the 'HIGH' region element. L-tryptophan is bound at residue Asp-142. ATP-binding positions include 154–156 (GND), Ile-193, and 202–206 (KMSKS). The 'KMSKS' region motif lies at 202–206 (KMSKS).

This sequence belongs to the class-I aminoacyl-tRNA synthetase family. In terms of assembly, homodimer.

It is found in the cytoplasm. The enzyme catalyses tRNA(Trp) + L-tryptophan + ATP = L-tryptophyl-tRNA(Trp) + AMP + diphosphate + H(+). Its function is as follows. Catalyzes the attachment of tryptophan to tRNA(Trp). This is Tryptophan--tRNA ligase from Clostridium tetani (strain Massachusetts / E88).